A 400-amino-acid polypeptide reads, in one-letter code: tRNA-specific 2-thiouridylase MnmA (400 aa).

Residues 19 to 26 (AMSGGVDS) and leucine 45 each bind ATP. Cysteine 113 acts as the Nucleophile in catalysis. An intrachain disulfide couples cysteine 113 to cysteine 210. An ATP-binding site is contributed by glycine 137. Residues 160-162 (RDQ) are interaction with tRNA. The Cysteine persulfide intermediate role is filled by cysteine 210.

The protein belongs to the MnmA/TRMU family.

It localises to the cytoplasm. It catalyses the reaction S-sulfanyl-L-cysteinyl-[protein] + uridine(34) in tRNA + AH2 + ATP = 2-thiouridine(34) in tRNA + L-cysteinyl-[protein] + A + AMP + diphosphate + H(+). In terms of biological role, catalyzes the 2-thiolation of uridine at the wobble position (U34) of tRNA, leading to the formation of s(2)U34. This chain is tRNA-specific 2-thiouridylase MnmA, found in Nitrobacter winogradskyi (strain ATCC 25391 / DSM 10237 / CIP 104748 / NCIMB 11846 / Nb-255).